A 56-amino-acid polypeptide reads, in one-letter code: MAVQQNKPTRSKRGMRRSHDSLTTAALSVDKVSGETHLRHHITADGYYRGRKVIVK.

A disordered region spans residues 1–26 (MAVQQNKPTRSKRGMRRSHDSLTTAA).

This sequence belongs to the bacterial ribosomal protein bL32 family.

This Erwinia tasmaniensis (strain DSM 17950 / CFBP 7177 / CIP 109463 / NCPPB 4357 / Et1/99) protein is Large ribosomal subunit protein bL32.